Here is a 255-residue protein sequence, read N- to C-terminus: Small ribosomal subunit protein uS2 (255 aa).

It belongs to the universal ribosomal protein uS2 family.

The chain is Small ribosomal subunit protein uS2 from Streptococcus thermophilus (strain ATCC BAA-491 / LMD-9).